Here is a 692-residue protein sequence, read N- to C-terminus: Polyribonucleotide nucleotidyltransferase (692 aa).

Positions 484 and 490 each coordinate Mg(2+). A KH domain is found at 551–614; that stretch reads PKYFIHKISQ…ALVERVKSIT (64 aa). The region spanning 620–688 is the S1 motif domain; sequence GAVYTGKVKT…NRGRIRLSRK (69 aa).

This sequence belongs to the polyribonucleotide nucleotidyltransferase family. The cofactor is Mg(2+).

Its subcellular location is the cytoplasm. It carries out the reaction RNA(n+1) + phosphate = RNA(n) + a ribonucleoside 5'-diphosphate. Its function is as follows. Involved in mRNA degradation. Catalyzes the phosphorolysis of single-stranded polyribonucleotides processively in the 3'- to 5'-direction. The sequence is that of Polyribonucleotide nucleotidyltransferase from Desulfotalea psychrophila (strain LSv54 / DSM 12343).